Reading from the N-terminus, the 243-residue chain is Isoprenyl transferase 2 (243 aa).

Residue aspartate 23 is part of the active site. Aspartate 23 serves as a coordination point for Mg(2+). Substrate-binding positions include 24–27, tryptophan 28, arginine 36, histidine 40, and 68–70; these read GNGR and STE. Asparagine 71 functions as the Proton acceptor in the catalytic mechanism. Substrate contacts are provided by residues tryptophan 72, arginine 74, arginine 191, and 197 to 199; that span reads RTS. Glutamate 210 contributes to the Mg(2+) binding site.

The protein belongs to the UPP synthase family. In terms of assembly, homodimer. It depends on Mg(2+) as a cofactor.

Functionally, catalyzes the condensation of isopentenyl diphosphate (IPP) with allylic pyrophosphates generating different type of terpenoids. The protein is Isoprenyl transferase 2 of Corynebacterium efficiens (strain DSM 44549 / YS-314 / AJ 12310 / JCM 11189 / NBRC 100395).